A 433-amino-acid chain; its full sequence is GTPase Der (433 aa).

EngA-type G domains follow at residues 3–167 (NIVA…QDTI) and 174–349 (PKIA…TNKT). GTP is bound by residues 9–16 (GRPNVGKS), 56–60 (DTGGY), 119–122 (NKAD), 180–187 (GRPNVGKS), 227–231 (DTAGI), and 292–295 (NKWD). Residues 350-433 (QKISTAALNQ…VPVQLVFRKK (84 aa)) form the KH-like domain.

The protein belongs to the TRAFAC class TrmE-Era-EngA-EngB-Septin-like GTPase superfamily. EngA (Der) GTPase family. Associates with the 50S ribosomal subunit.

In terms of biological role, GTPase that plays an essential role in the late steps of ribosome biogenesis. The sequence is that of GTPase Der from Amoebophilus asiaticus (strain 5a2).